We begin with the raw amino-acid sequence, 176 residues long: Peptide methionine sulfoxide reductase MsrA (176 aa).

C10 is a catalytic residue.

This sequence belongs to the MsrA Met sulfoxide reductase family.

It catalyses the reaction L-methionyl-[protein] + [thioredoxin]-disulfide + H2O = L-methionyl-(S)-S-oxide-[protein] + [thioredoxin]-dithiol. It carries out the reaction [thioredoxin]-disulfide + L-methionine + H2O = L-methionine (S)-S-oxide + [thioredoxin]-dithiol. Has an important function as a repair enzyme for proteins that have been inactivated by oxidation. Catalyzes the reversible oxidation-reduction of methionine sulfoxide in proteins to methionine. This Leptospira borgpetersenii serovar Hardjo-bovis (strain L550) protein is Peptide methionine sulfoxide reductase MsrA.